The primary structure comprises 209 residues: ATP synthase subunit b', chloroplastic (209 aa).

The N-terminal 62 residues, 1–62, are a transit peptide targeting the chloroplast; sequence MASLLARPQQ…NALMAMPAAA (62 aa). A helical transmembrane segment spans residues 67–87; the sequence is IFDFNLTLPVMAGEFLLLMVF.

It belongs to the ATPase B chain family. In terms of assembly, F-type ATPases have 2 components, F(1) - the catalytic core - and F(0) - the membrane proton channel. F(1) has five subunits: alpha(3), beta(3), gamma(1), delta(1), epsilon(1). F(0) has four main subunits: a(1), b(1), b'(1) and c(10-14). The alpha and beta chains form an alternating ring which encloses part of the gamma chain. F(1) is attached to F(0) by a central stalk formed by the gamma and epsilon chains, while a peripheral stalk is formed by the delta, b and b' chains.

It is found in the plastid. It localises to the chloroplast thylakoid membrane. Functionally, f(1)F(0) ATP synthase produces ATP from ADP in the presence of a proton or sodium gradient. F-type ATPases consist of two structural domains, F(1) containing the extramembraneous catalytic core and F(0) containing the membrane proton channel, linked together by a central stalk and a peripheral stalk. During catalysis, ATP synthesis in the catalytic domain of F(1) is coupled via a rotary mechanism of the central stalk subunits to proton translocation. In terms of biological role, component of the F(0) channel, it forms part of the peripheral stalk, linking F(1) to F(0). The b'-subunit is a diverged and duplicated form of b found in plants and photosynthetic bacteria. This Chlamydomonas reinhardtii (Chlamydomonas smithii) protein is ATP synthase subunit b', chloroplastic.